The chain runs to 96 residues: Integration host factor subunit beta (96 aa).

Belongs to the bacterial histone-like protein family. Heterodimer of an alpha and a beta chain.

In terms of biological role, this protein is one of the two subunits of integration host factor, a specific DNA-binding protein that functions in genetic recombination as well as in transcriptional and translational control. The chain is Integration host factor subunit beta from Dichelobacter nodosus (strain VCS1703A).